Reading from the N-terminus, the 705-residue chain is ATP-dependent DNA helicase Q-like 2 (705 aa).

Positions M1–H30 form a coiled coil. Positions I98–V273 constitute a Helicase ATP-binding domain. Residue M111–S118 participates in ATP binding. Residues D217–H220 carry the DEAH box motif. The 153-residue stretch at V298–T450 folds into the Helicase C-terminal domain. An HRDC domain is found at S591–L670. Residues E668–A705 are disordered.

This sequence belongs to the helicase family. RecQ subfamily. As to quaternary structure, interacts with WEX. It depends on Mg(2+) as a cofactor. The cofactor is Mn(2+). Expressed in shoots and flowers. Expressed in young leaves, inflorescences, roots, shoot apical meristem, young siliques, and mature green siliques.

Its subcellular location is the nucleus. It catalyses the reaction Couples ATP hydrolysis with the unwinding of duplex DNA by translocating in the 3'-5' direction.. The catalysed reaction is ATP + H2O = ADP + phosphate + H(+). 3'-5' DNA helicase that may play a role in the repair of DNA. Its DNA unwinding activity in vitro is dependent on magnesium, and ATP or dATP. Can use GTP/dGTP, CTP/dCTP or UTP/dUTP as nucleotide cofactors. Catalyzes Holliday junction branch migration and replication fork regression. Disrupts D-loop structures. Unwinds G-quadruplex DNA, found in telomeric DNA. The protein is ATP-dependent DNA helicase Q-like 2 of Arabidopsis thaliana (Mouse-ear cress).